A 405-amino-acid polypeptide reads, in one-letter code: Aspartokinase (405 aa).

7 to 10 is an ATP binding site; it reads KYGG. Position 25 to 30 (25 to 30) interacts with substrate; sequence RIAHYR. Residue serine 41 participates in ATP binding. Substrate-binding positions include 47–49, glutamate 74, 125–126, 150–153, and serine 153; these read TDE, LD, and RGGS. ATP is bound by residues 173 to 174, 179 to 184, and arginine 209; these read TD and YTTDPH. 2 consecutive ACT domains span residues 263 to 342 and 344 to 405; these read IGLI…IAKV and IVGV…LDKA. Substrate contacts are provided by residues aspartate 270, 274 to 275, 288 to 290, glutamine 294, 355 to 356, 369 to 370, and 376 to 377; these read IA, AVD, VP, NI, and SE.

The protein belongs to the aspartokinase family. In terms of assembly, heterotetramer consisting of 2 isoforms Alpha (catalytic and regulation) and of a homodimer of 2 isoforms Beta (regulation and thermostability).

The catalysed reaction is L-aspartate + ATP = 4-phospho-L-aspartate + ADP. It participates in amino-acid biosynthesis; L-lysine biosynthesis via DAP pathway; (S)-tetrahydrodipicolinate from L-aspartate: step 1/4. The protein operates within amino-acid biosynthesis; L-methionine biosynthesis via de novo pathway; L-homoserine from L-aspartate: step 1/3. Its pathway is amino-acid biosynthesis; L-threonine biosynthesis; L-threonine from L-aspartate: step 1/5. With respect to regulation, inhibited by threonine. Catalyzes the phosphorylation of the beta-carboxyl group of aspartic acid with ATP to yield 4-phospho-L-aspartate, which is involved in the branched biosynthetic pathway leading to the biosynthesis of amino acids threonine, isoleucine and methionine. The chain is Aspartokinase (ask) from Thermus thermophilus.